We begin with the raw amino-acid sequence, 552 residues long: Glutamine--tRNA ligase (552 aa).

Residues 34-44 (PEPNGYLHIGH) carry the 'HIGH' region motif. ATP is bound by residues 35 to 37 (EPN) and 41 to 47 (HIGHAKS). Positions 67 and 212 each coordinate L-glutamine. ATP contacts are provided by residues threonine 231, 261–262 (RL), and 269–271 (MSK). A 'KMSKS' region motif is present at residues 268-272 (VMSKR).

The protein belongs to the class-I aminoacyl-tRNA synthetase family. Monomer.

It localises to the cytoplasm. The catalysed reaction is tRNA(Gln) + L-glutamine + ATP = L-glutaminyl-tRNA(Gln) + AMP + diphosphate. This chain is Glutamine--tRNA ligase, found in Aliivibrio fischeri (strain MJ11) (Vibrio fischeri).